A 227-amino-acid chain; its full sequence is Germin-like protein subfamily T member 3 (227 aa).

Positions Met-1 to Thr-26 are cleaved as a signal peptide. A disulfide bridge links Cys-44 with Cys-59. The Cupin type-1 domain occupies Ser-71–Asn-219. N-linked (GlcNAc...) asparagine glycosylation occurs at Asn-78. Residues His-119, His-121, and Glu-126 each contribute to the Mn(2+) site. Residue Asn-143 is glycosylated (N-linked (GlcNAc...) asparagine). His-165 serves as a coordination point for Mn(2+).

This sequence belongs to the germin family. As to quaternary structure, oligomer (believed to be a pentamer but probably hexamer).

The protein resides in the secreted. It is found in the extracellular space. It localises to the apoplast. Its function is as follows. May play a role in plant defense. Probably has no oxalate oxidase activity even if the active site is conserved. In Arabidopsis thaliana (Mouse-ear cress), this protein is Germin-like protein subfamily T member 3.